Reading from the N-terminus, the 274-residue chain is MSLQETIIQELGVKPVIDAQEEIRRSIDFLKRYLKKHPFLKTFVLGISGGQDSTLAGRLAQLAMEELRAETGDDSYKFIAVRLPYGVQADEADAQKALAFIQPDVSLVVNIKESADAMTAAVEATGSPVSDFNKGNIKARCRMIAQYALAGSHSGAVIGTDHAAENITGFFTKFGDGGADILPLYRLNKRQGKQLLQKLGAEPALYEKIPTADLEEDKPGLADEVALGVTYAEIDDYLEGKTISPEAQATIENWWHKGQHKRHLPITVFDDFWE.

Residue 46 to 53 (GISGGQDS) participates in ATP binding. Residue Asp-52 coordinates Mg(2+). Arg-140 serves as a coordination point for deamido-NAD(+). An ATP-binding site is contributed by Thr-160. Residue Glu-165 coordinates Mg(2+). Residues Lys-173 and Asp-180 each coordinate deamido-NAD(+). Positions 189 and 211 each coordinate ATP. 260 to 261 (HK) lines the deamido-NAD(+) pocket.

The protein belongs to the NAD synthetase family. Homodimer.

It catalyses the reaction deamido-NAD(+) + NH4(+) + ATP = AMP + diphosphate + NAD(+) + H(+). It functions in the pathway cofactor biosynthesis; NAD(+) biosynthesis; NAD(+) from deamido-NAD(+) (ammonia route): step 1/1. Its function is as follows. Catalyzes the ATP-dependent amidation of deamido-NAD to form NAD. Uses ammonia as a nitrogen source. The polypeptide is NH(3)-dependent NAD(+) synthetase (Streptococcus pneumoniae serotype 2 (strain D39 / NCTC 7466)).